The primary structure comprises 421 residues: Flap endonuclease 1 (421 aa).

Residues 1-109 (MGIKGLAKLL…HELIKRREKR (109 aa)) form an N-domain region. Aspartate 34 is a binding site for Mg(2+). DNA-binding residues include arginine 47 and arginine 75. The Mg(2+) site is built by aspartate 91, glutamate 163, glutamate 165, aspartate 184, and aspartate 186. The tract at residues 127–258 (EQDKQSKRLV…KTALKLIREH (132 aa)) is I-domain. Glutamate 163 provides a ligand contact to DNA. 2 residues coordinate DNA: glycine 236 and aspartate 238. Residue aspartate 238 participates in Mg(2+) binding. A disordered region spans residues 284–307 (KKLDAQSDDDDEEGVESPSKEENN). Residues 289 to 298 (QSDDDDEEGV) are compositionally biased toward acidic residues. Residues 379–387 (PQTRMDSFF) form an interaction with PCNA region. The interval 398 to 421 (SAAKRKADAAKAKAAVSKKKTKKH) is disordered.

This sequence belongs to the XPG/RAD2 endonuclease family. FEN1 subfamily. Interacts with PCNA. Three molecules of FEN1 bind to one PCNA trimer with each molecule binding to one PCNA monomer. PCNA stimulates the nuclease activity without altering cleavage specificity. Requires Mg(2+) as cofactor. In terms of processing, phosphorylated. Phosphorylation upon DNA damage induces relocalization to the nuclear plasma.

The protein localises to the nucleus. The protein resides in the nucleolus. Its subcellular location is the nucleoplasm. It is found in the mitochondrion. Functionally, structure-specific nuclease with 5'-flap endonuclease and 5'-3' exonuclease activities involved in DNA replication and repair. During DNA replication, cleaves the 5'-overhanging flap structure that is generated by displacement synthesis when DNA polymerase encounters the 5'-end of a downstream Okazaki fragment. It enters the flap from the 5'-end and then tracks to cleave the flap base, leaving a nick for ligation. Also involved in the long patch base excision repair (LP-BER) pathway, by cleaving within the apurinic/apyrimidinic (AP) site-terminated flap. Acts as a genome stabilization factor that prevents flaps from equilibrating into structures that lead to duplications and deletions. Also possesses 5'-3' exonuclease activity on nicked or gapped double-stranded DNA, and exhibits RNase H activity. Also involved in replication and repair of rDNA and in repairing mitochondrial DNA. The sequence is that of Flap endonuclease 1 from Phaeodactylum tricornutum (strain CCAP 1055/1).